We begin with the raw amino-acid sequence, 120 residues long: Small cysteine and glycine repeat-containing protein 2 (120 aa).

Positions 4–104 (CGCGGCGGCG…TCHSCGCGCG (101 aa)) are 19 X 2 AA repeats of CG.

The protein belongs to the KRTAP type 28 family.

In terms of biological role, in the hair cortex, hair keratin intermediate filaments are embedded in an interfilamentous matrix, consisting of hair keratin-associated proteins (KRTAP), which are essential for the formation of a rigid and resistant hair shaft through their extensive disulfide bond cross-linking with abundant cysteine residues of hair keratins. The matrix proteins include the high-sulfur and high-glycine-tyrosine keratins. The polypeptide is Small cysteine and glycine repeat-containing protein 2 (Homo sapiens (Human)).